Reading from the N-terminus, the 479-residue chain is Ribulose bisphosphate carboxylase large chain (479 aa).

The propeptide occupies 1–2; it reads MS. Substrate is bound by residues Asn-123 and Thr-173. Lys-175 functions as the Proton acceptor in the catalytic mechanism. Lys-177 serves as a coordination point for substrate. 3 residues coordinate Mg(2+): Lys-201, Asp-203, and Glu-204. Position 201 is an N6-carboxylysine (Lys-201). A Phosphoserine modification is found at Ser-208. His-294 serves as the catalytic Proton acceptor. Substrate is bound by residues Arg-295 and His-327. Thr-330 is modified (phosphothreonine). Substrate is bound at residue Ser-379.

It belongs to the RuBisCO large chain family. Type I subfamily. In terms of assembly, heterohexadecamer of 8 large chains and 8 small chains; disulfide-linked. The disulfide link is formed within the large subunit homodimers. Requires Mg(2+) as cofactor. Post-translationally, the disulfide bond which can form in the large chain dimeric partners within the hexadecamer appears to be associated with oxidative stress and protein turnover.

The protein resides in the plastid. It localises to the chloroplast. The enzyme catalyses 2 (2R)-3-phosphoglycerate + 2 H(+) = D-ribulose 1,5-bisphosphate + CO2 + H2O. It carries out the reaction D-ribulose 1,5-bisphosphate + O2 = 2-phosphoglycolate + (2R)-3-phosphoglycerate + 2 H(+). In terms of biological role, ruBisCO catalyzes two reactions: the carboxylation of D-ribulose 1,5-bisphosphate, the primary event in carbon dioxide fixation, as well as the oxidative fragmentation of the pentose substrate in the photorespiration process. Both reactions occur simultaneously and in competition at the same active site. In Brassica oleracea (Wild cabbage), this protein is Ribulose bisphosphate carboxylase large chain.